Here is a 433-residue protein sequence, read N- to C-terminus: Histidine--tRNA ligase (433 aa).

This sequence belongs to the class-II aminoacyl-tRNA synthetase family. As to quaternary structure, homodimer.

The protein localises to the cytoplasm. The enzyme catalyses tRNA(His) + L-histidine + ATP = L-histidyl-tRNA(His) + AMP + diphosphate + H(+). This chain is Histidine--tRNA ligase, found in Blochmanniella floridana.